Here is a 768-residue protein sequence, read N- to C-terminus: Transferrin receptor protein 1 (768 aa).

At 1–68 (MMDQARSAFS…VAKPKRLNGY (68 aa)) the chain is on the cytoplasmic side. The segment at 1–70 (MMDQARSAFS…KPKRLNGYVC (70 aa)) is mediates interaction with SH3BP4. A phosphoserine mark is found at Ser10 and Ser19. Residue Tyr20 is modified to Phosphotyrosine. Positions 20–23 (YTRF) match the Endocytosis signal motif. Thr21 carries the phosphothreonine modification. Ser24 is subject to Phosphoserine. A Stop-transfer sequence motif is present at residues 61 to 64 (KPKR). A helical membrane pass occupies residues 69–89 (VCYGIIAVITFFLIGFMIGYL). Cys70 is lipidated: S-palmitoyl cysteine. Over 90-768 (AYCKRVESKT…GDIWDIDNEF (679 aa)) the chain is Extracellular. The region spanning 231-321 (SKATTVTGKL…GTGDPYTPGF (91 aa)) is the PA domain. 2 N-linked (GlcNAc...) asparagine glycosylation sites follow: Asn259 and Asn325. The segment at 577–768 (TMDTYDVLSK…GDIWDIDNEF (192 aa)) is ligand-binding. Residues 654-656 (RGD) carry the Cell attachment site motif. Asn730 and Asn735 each carry an N-linked (GlcNAc...) asparagine glycan.

The protein belongs to the peptidase M28 family. M28B subfamily. In terms of assembly, homodimer; disulfide-linked. Binds one transferrin or HFE molecule per subunit. Interacts with SH3BP4. Interacts with SH3BP3. Interacts with STEAP3; facilitates TFRC endocytosis in erythroid precursor cells. Stearoylated by ZDHHC6 which inhibits TFRC-mediated activation of the JNK pathway and promotes mitochondrial fragmentation. Stearoylation does not affect iron uptake.

The protein resides in the cell membrane. It localises to the melanosome. Its function is as follows. Cellular uptake of iron occurs via receptor-mediated endocytosis of ligand-occupied transferrin receptor into specialized endosomes. Endosomal acidification leads to iron release. The apotransferrin-receptor complex is then recycled to the cell surface with a return to neutral pH and the concomitant loss of affinity of apotransferrin for its receptor. Transferrin receptor is necessary for development of erythrocytes and the nervous system. Positively regulates T and B cell proliferation through iron uptake. Acts as a lipid sensor that regulates mitochondrial fusion by regulating activation of the JNK pathway. When dietary levels of stearate (C18:0) are low, promotes activation of the JNK pathway, resulting in HUWE1-mediated ubiquitination and subsequent degradation of the mitofusin MFN2 and inhibition of mitochondrial fusion. When dietary levels of stearate (C18:0) are high, TFRC stearoylation inhibits activation of the JNK pathway and thus degradation of the mitofusin MFN2. Mediates uptake of NICOL1 into fibroblasts where it may regulate extracellular matrix production. In Sus scrofa (Pig), this protein is Transferrin receptor protein 1 (TFRC).